A 525-amino-acid chain; its full sequence is Probable bifunctional tRNA threonylcarbamoyladenosine biosynthesis protein (525 aa).

Positions 1 to 322 (MPEKRVLGIE…FRSDQVEVTW (322 aa)) are kae1. The Fe cation site is built by histidine 106, histidine 110, and tyrosine 127. L-threonylcarbamoyladenylate contacts are provided by residues 127-131 (YASGA), aspartate 159, glycine 172, glutamate 176, and asparagine 255. Aspartate 283 contributes to the Fe cation binding site. Positions 331–525 (APGQSETAER…HEIELRGRYL (195 aa)) constitute a Protein kinase domain. Residues 338–346 (AERGAEASV) and lysine 355 contribute to the ATP site. The Proton acceptor; for kinase activity role is filled by aspartate 442.

In the N-terminal section; belongs to the KAE1 / TsaD family. It in the C-terminal section; belongs to the protein kinase superfamily. Tyr protein kinase family. BUD32 subfamily. Component of the KEOPS complex that consists of Kae1, Bud32, Cgi121 and Pcc1; the whole complex dimerizes. Fe(2+) is required as a cofactor.

It localises to the cytoplasm. It carries out the reaction L-seryl-[protein] + ATP = O-phospho-L-seryl-[protein] + ADP + H(+). The catalysed reaction is L-threonyl-[protein] + ATP = O-phospho-L-threonyl-[protein] + ADP + H(+). It catalyses the reaction L-threonylcarbamoyladenylate + adenosine(37) in tRNA = N(6)-L-threonylcarbamoyladenosine(37) in tRNA + AMP + H(+). In terms of biological role, required for the formation of a threonylcarbamoyl group on adenosine at position 37 (t(6)A37) in tRNAs that read codons beginning with adenine. Is a component of the KEOPS complex that is probably involved in the transfer of the threonylcarbamoyl moiety of threonylcarbamoyl-AMP (TC-AMP) to the N6 group of A37. The Kae1 domain likely plays a direct catalytic role in this reaction. The Bud32 domain probably displays kinase activity that regulates Kae1 function. The sequence is that of Probable bifunctional tRNA threonylcarbamoyladenosine biosynthesis protein from Methanocorpusculum labreanum (strain ATCC 43576 / DSM 4855 / Z).